We begin with the raw amino-acid sequence, 473 residues long: Ribulose bisphosphate carboxylase large chain (473 aa).

Asn-116 and Thr-166 together coordinate substrate. Lys-168 functions as the Proton acceptor in the catalytic mechanism. Lys-170 serves as a coordination point for substrate. Mg(2+) contacts are provided by Lys-194, Asp-196, and Glu-197. Lys-194 carries the post-translational modification N6-carboxylysine. Catalysis depends on His-287, which acts as the Proton acceptor. Arg-288, His-320, and Ser-372 together coordinate substrate.

This sequence belongs to the RuBisCO large chain family. Type I subfamily. As to quaternary structure, heterohexadecamer of 8 large chains and 8 small chains. The cofactor is Mg(2+).

The enzyme catalyses 2 (2R)-3-phosphoglycerate + 2 H(+) = D-ribulose 1,5-bisphosphate + CO2 + H2O. It carries out the reaction D-ribulose 1,5-bisphosphate + O2 = 2-phosphoglycolate + (2R)-3-phosphoglycerate + 2 H(+). In terms of biological role, ruBisCO catalyzes two reactions: the carboxylation of D-ribulose 1,5-bisphosphate, the primary event in carbon dioxide fixation, as well as the oxidative fragmentation of the pentose substrate. Both reactions occur simultaneously and in competition at the same active site. This chain is Ribulose bisphosphate carboxylase large chain, found in Cupriavidus metallidurans (strain ATCC 43123 / DSM 2839 / NBRC 102507 / CH34) (Ralstonia metallidurans).